Consider the following 311-residue polypeptide: tRNA-cytidine(32) 2-sulfurtransferase (311 aa).

A PP-loop motif motif is present at residues 47–52 (SGGKDS). Positions 122, 125, and 213 each coordinate [4Fe-4S] cluster.

Belongs to the TtcA family. In terms of assembly, homodimer. Mg(2+) serves as cofactor. Requires [4Fe-4S] cluster as cofactor.

The protein localises to the cytoplasm. The enzyme catalyses cytidine(32) in tRNA + S-sulfanyl-L-cysteinyl-[cysteine desulfurase] + AH2 + ATP = 2-thiocytidine(32) in tRNA + L-cysteinyl-[cysteine desulfurase] + A + AMP + diphosphate + H(+). It participates in tRNA modification. In terms of biological role, catalyzes the ATP-dependent 2-thiolation of cytidine in position 32 of tRNA, to form 2-thiocytidine (s(2)C32). The sulfur atoms are provided by the cysteine/cysteine desulfurase (IscS) system. This Salmonella paratyphi B (strain ATCC BAA-1250 / SPB7) protein is tRNA-cytidine(32) 2-sulfurtransferase.